Here is a 445-residue protein sequence, read N- to C-terminus: Phosphoglucosamine mutase (445 aa).

The Phosphoserine intermediate role is filled by S102. Positions 102, 241, 243, and 245 each coordinate Mg(2+). Phosphoserine is present on S102.

Belongs to the phosphohexose mutase family. Mg(2+) is required as a cofactor. Activated by phosphorylation.

It carries out the reaction alpha-D-glucosamine 1-phosphate = D-glucosamine 6-phosphate. Catalyzes the conversion of glucosamine-6-phosphate to glucosamine-1-phosphate. This is Phosphoglucosamine mutase from Aliivibrio fischeri (strain MJ11) (Vibrio fischeri).